A 70-amino-acid chain; its full sequence is DNA-directed RNA polymerase subunit epsilon (70 aa).

This sequence belongs to the RNA polymerase subunit epsilon family. RNAP is composed of a core of 2 alpha, a beta and a beta' subunit. The core is associated with a delta subunit, and at least one of epsilon or omega. When a sigma factor is associated with the core the holoenzyme is formed, which can initiate transcription.

It carries out the reaction RNA(n) + a ribonucleoside 5'-triphosphate = RNA(n+1) + diphosphate. A non-essential component of RNA polymerase (RNAP). This chain is DNA-directed RNA polymerase subunit epsilon, found in Limosilactobacillus reuteri (strain DSM 20016) (Lactobacillus reuteri).